The sequence spans 31 residues: Cytochrome b6-f complex subunit 6 (31 aa).

The helical transmembrane segment at 4–24 (LTSYFGFLLAALTITFVLFIG) threads the bilayer.

The protein belongs to the PetL family. In terms of assembly, the 4 large subunits of the cytochrome b6-f complex are cytochrome b6, subunit IV (17 kDa polypeptide, PetD), cytochrome f and the Rieske protein, while the 4 small subunits are PetG, PetL, PetM and PetN. The complex functions as a dimer.

It is found in the plastid. Its subcellular location is the chloroplast thylakoid membrane. Its function is as follows. Component of the cytochrome b6-f complex, which mediates electron transfer between photosystem II (PSII) and photosystem I (PSI), cyclic electron flow around PSI, and state transitions. PetL is important for photoautotrophic growth as well as for electron transfer efficiency and stability of the cytochrome b6-f complex. This chain is Cytochrome b6-f complex subunit 6, found in Oxybasis rubra (Red goosefoot).